Consider the following 502-residue polypeptide: Protein DETOXIFICATION 55 (502 aa).

The next 12 membrane-spanning stretches (helical) occupy residues 30–50, 61–81, 112–132, 145–165, 185–205, 207–227, 261–283, 298–318, 344–364, 378–398, 419–439, and 447–467; these read IWDI…KNMT, LELA…YSVL, IFLL…LAPL, VASL…FLHP, VSVL…SLGV, GVAV…LCYI, VWST…WWWY, VALA…TIPT, ATVA…GTTV, VVLE…LANC, INFY…AFVW, and CYGL…VVYN.

This sequence belongs to the multi antimicrobial extrusion (MATE) (TC 2.A.66.1) family.

The protein localises to the membrane. This Arabidopsis thaliana (Mouse-ear cress) protein is Protein DETOXIFICATION 55.